The primary structure comprises 702 residues: Protein-glucosylgalactosylhydroxylysine glucosidase (702 aa).

310–311 (WD) provides a ligand contact to substrate. Residue E440 is the Proton donor of the active site. 508 to 509 (KQ) provides a ligand contact to substrate.

It belongs to the glycosyl hydrolase 65 family.

It carries out the reaction (5R)-5-O-[alpha-D-glucosyl-(1-&gt;2)-beta-D-galactosyl]-5-hydroxy-L-lysyl-[collagen] + H2O = (5R)-5-O-(beta-D-galactosyl)-5-hydroxy-L-lysyl-[collagen] + D-glucose. Its function is as follows. Catalyzes the hydrolysis of glucose from the disaccharide unit linked to hydroxylysine residues of collagen and collagen-like proteins. In Gallus gallus (Chicken), this protein is Protein-glucosylgalactosylhydroxylysine glucosidase.